Here is a 66-residue protein sequence, read N- to C-terminus: Large ribosomal subunit protein uL29 (66 aa).

This sequence belongs to the universal ribosomal protein uL29 family.

The sequence is that of Large ribosomal subunit protein uL29 from Francisella tularensis subsp. holarctica (strain LVS).